Consider the following 386-residue polypeptide: Lysophosphatidylserine lipase ABHD12 (386 aa).

Residues 1–66 are Cytoplasmic-facing; sequence MRKRAEPVPP…YGLWSRLRMF (66 aa). A helical transmembrane segment spans residues 67-87; the sequence is LIFLLGLYIAIPFLVKICPAI. The Extracellular portion of the chain corresponds to 88–386; the sequence is QTQLVFLNLV…RDFLGNTEQQ (299 aa). An N-linked (GlcNAc...) asparagine glycan is attached at Asn114. Ser237 acts as the Nucleophile in catalysis. Active-site charge relay system residues include Asp324 and His363.

This sequence belongs to the serine esterase family.

The protein resides in the endoplasmic reticulum membrane. It catalyses the reaction 1-(9Z-octadecenoyl)-sn-glycero-3-phospho-L-serine + H2O = sn-glycero-3-phospho-L-serine + (9Z)-octadecenoate + H(+). The enzyme catalyses 1-(9Z-octadecenoyl)-sn-glycero-3-phospho-(1'-sn-glycerol) + H2O = sn-glycero-3-phospho-(1'-sn-glycerol) + (9Z)-octadecenoate + H(+). The catalysed reaction is 1-(9Z-octadecenoyl)-sn-glycero-3-phospho-(1D-myo-inositol) + H2O = sn-glycero-3-phospho-1D-myo-inositol + (9Z)-octadecenoate + H(+). It carries out the reaction 1-(9Z-octadecenoyl)-sn-glycero-3-phosphoethanolamine + H2O = sn-glycero-3-phosphoethanolamine + (9Z)-octadecenoate + H(+). It catalyses the reaction 1-(9Z-octadecenoyl)-sn-glycero-3-phosphocholine + H2O = 1-(9Z-octadecenoyl)-sn-glycerol + phosphocholine + H(+). The enzyme catalyses 2-(9Z-octadecenoyl)-glycerol + H2O = glycerol + (9Z)-octadecenoate + H(+). The catalysed reaction is 1-hexadecanoyl-sn-glycero-3-phospho-L-serine + H2O = sn-glycero-3-phospho-L-serine + hexadecanoate + H(+). It carries out the reaction 2-(5Z,8Z,11Z,14Z-eicosatetraenoyl)-glycerol + H2O = glycerol + (5Z,8Z,11Z,14Z)-eicosatetraenoate + H(+). It catalyses the reaction Hydrolyzes glycerol monoesters of long-chain fatty acids.. The enzyme catalyses 1-decanoylglycerol + H2O = decanoate + glycerol + H(+). The catalysed reaction is 1-dodecanoylglycerol + H2O = dodecanoate + glycerol + H(+). It carries out the reaction 1-tetradecanoylglycerol + H2O = tetradecanoate + glycerol + H(+). It catalyses the reaction 2-hexadecanoylglycerol + H2O = glycerol + hexadecanoate + H(+). The enzyme catalyses 1-(9Z-octadecenoyl)-glycerol + H2O = glycerol + (9Z)-octadecenoate + H(+). The catalysed reaction is 2-(9Z,12Z-octadecadienoyl)-glycerol + H2O = (9Z,12Z)-octadecadienoate + glycerol + H(+). It carries out the reaction 1-(5Z,8Z,11Z,14Z-eicosatetraenoyl)-glycerol + H2O = glycerol + (5Z,8Z,11Z,14Z)-eicosatetraenoate + H(+). It catalyses the reaction 1-(9Z,12Z-octadecadienoyl)-glycerol + H2O = (9Z,12Z)-octadecadienoate + glycerol + H(+). The enzyme catalyses 1-hexadecanoylglycerol + H2O = glycerol + hexadecanoate + H(+). The catalysed reaction is 1-octadecanoylglycerol + H2O = octadecanoate + glycerol + H(+). It carries out the reaction 1-octadecanoyl-2-(9,10-epoxyoctadecanoyl)-sn-glycero-3-phospho-L-serine + H2O = 9,10-epoxyoctadecanoate + 1-octadecanoyl-sn-glycero-3-phosphoserine + H(+). It catalyses the reaction 1-octadecanoyl-2-(10-hydroxyoctadecanoyl)-sn-glycero-3-phospho-L-serine + H2O = 1-octadecanoyl-sn-glycero-3-phosphoserine + 10-hydroxyoctadecanoate + H(+). The enzyme catalyses 1-hexadecanoyl-2-(10-hydroxyoctadecanoyl)-sn-glycero-3-phospho-L-serine + H2O = 10-hydroxyoctadecanoate + 1-hexadecanoyl-sn-glycero-3-phospho-L-serine + H(+). Functionally, lysophosphatidylserine (LPS) lipase that mediates the hydrolysis of lysophosphatidylserine, a class of signaling lipids that regulates immunological and neurological processes. Represents a major lysophosphatidylserine lipase in the brain, thereby playing a key role in the central nervous system. Also able to hydrolyze oxidized phosphatidylserine; oxidized phosphatidylserine is produced in response to severe inflammatory stress and constitutes a proapoptotic 'eat me' signal. Also has monoacylglycerol (MAG) lipase activity: hydrolyzes 2-arachidonoylglycerol (2-AG), thereby acting as a regulator of endocannabinoid signaling pathways. Has a strong preference for very-long-chain lipid substrates; substrate specificity is likely due to improved catalysis and not improved substrate binding. This is Lysophosphatidylserine lipase ABHD12 from Xenopus tropicalis (Western clawed frog).